A 667-amino-acid chain; its full sequence is DNA ligase (667 aa).

NAD(+) is bound by residues 32-36 (DKDYD) and 80-81 (SL). Lys121 functions as the N6-AMP-lysine intermediate in the catalytic mechanism. NAD(+) is bound by residues Arg143, Glu178, and Lys314. Zn(2+) contacts are provided by Cys407, Cys410, Cys423, and Cys429. The 81-residue stretch at 587 to 667 (IVESIFKDKT…EFEKMLGRES (81 aa)) folds into the BRCT domain.

Belongs to the NAD-dependent DNA ligase family. LigA subfamily. It depends on Mg(2+) as a cofactor. Requires Mn(2+) as cofactor.

It catalyses the reaction NAD(+) + (deoxyribonucleotide)n-3'-hydroxyl + 5'-phospho-(deoxyribonucleotide)m = (deoxyribonucleotide)n+m + AMP + beta-nicotinamide D-nucleotide.. Functionally, DNA ligase that catalyzes the formation of phosphodiester linkages between 5'-phosphoryl and 3'-hydroxyl groups in double-stranded DNA using NAD as a coenzyme and as the energy source for the reaction. It is essential for DNA replication and repair of damaged DNA. The protein is DNA ligase of Clostridium botulinum (strain Alaska E43 / Type E3).